The following is a 257-amino-acid chain: Pyridoxine 5'-phosphate synthase (257 aa).

Residue asparagine 6 participates in 3-amino-2-oxopropyl phosphate binding. 8-9 (DH) lines the 1-deoxy-D-xylulose 5-phosphate pocket. Arginine 17 contacts 3-amino-2-oxopropyl phosphate. Residue histidine 41 is the Proton acceptor of the active site. Residues arginine 43 and histidine 48 each contribute to the 1-deoxy-D-xylulose 5-phosphate site. Glutamate 68 serves as the catalytic Proton acceptor. Residue threonine 98 coordinates 1-deoxy-D-xylulose 5-phosphate. Residue histidine 210 is the Proton donor of the active site. 3-amino-2-oxopropyl phosphate-binding positions include glycine 211 and 232–233 (GQ).

Belongs to the PNP synthase family. As to quaternary structure, homooctamer; tetramer of dimers.

It localises to the cytoplasm. It carries out the reaction 3-amino-2-oxopropyl phosphate + 1-deoxy-D-xylulose 5-phosphate = pyridoxine 5'-phosphate + phosphate + 2 H2O + H(+). The protein operates within cofactor biosynthesis; pyridoxine 5'-phosphate biosynthesis; pyridoxine 5'-phosphate from D-erythrose 4-phosphate: step 5/5. In terms of biological role, catalyzes the complicated ring closure reaction between the two acyclic compounds 1-deoxy-D-xylulose-5-phosphate (DXP) and 3-amino-2-oxopropyl phosphate (1-amino-acetone-3-phosphate or AAP) to form pyridoxine 5'-phosphate (PNP) and inorganic phosphate. The chain is Pyridoxine 5'-phosphate synthase from Campylobacter jejuni (strain RM1221).